We begin with the raw amino-acid sequence, 333 residues long: Potassium channel protein 1 (333 aa).

The Cytoplasmic portion of the chain corresponds to 1–6 (METYEK). Residues 7–27 (IELGIIVIILLILIESVILMT) form a helical membrane-spanning segment. Residues 28–60 (VEGWDFFTAFYTAVVTISTVGYGDYTPQTFLGK) lie on the Extracellular side of the membrane. Positions 46–51 (TVGYGD) match the Selectivity filter motif. A helical transmembrane segment spans residues 61 to 81 (LSVIIYIFAGVGAVAYTMGNI). Residues 82-333 (ASFFIEGHFR…KLKRYVEGVE (252 aa)) lie on the Cytoplasmic side of the membrane. The RCK N-terminal domain occupies 107–229 (NNHYIICGYG…GADRAVCPYI (123 aa)). The RCK C-terminal domain occupies 246 to 331 (EFIHSLVATE…LEKLKRYVEG (86 aa)).

In terms of assembly, homotetramer.

It is found in the cell membrane. Potassium channel protein. Seems to conduct potassium at low membrane potentials. The protein is Potassium channel protein 1 of Methanocaldococcus jannaschii (strain ATCC 43067 / DSM 2661 / JAL-1 / JCM 10045 / NBRC 100440) (Methanococcus jannaschii).